A 303-amino-acid chain; its full sequence is Indole-3-glycerol phosphate synthase (303 aa).

The protein belongs to the TrpC family.

The enzyme catalyses 1-(2-carboxyphenylamino)-1-deoxy-D-ribulose 5-phosphate + H(+) = (1S,2R)-1-C-(indol-3-yl)glycerol 3-phosphate + CO2 + H2O. The protein operates within amino-acid biosynthesis; L-tryptophan biosynthesis; L-tryptophan from chorismate: step 4/5. This is Indole-3-glycerol phosphate synthase from Acaryochloris marina (strain MBIC 11017).